Here is a 232-residue protein sequence, read N- to C-terminus: Large ribosomal subunit protein uL1 (232 aa).

This sequence belongs to the universal ribosomal protein uL1 family. Part of the 50S ribosomal subunit.

Functionally, binds directly to 23S rRNA. The L1 stalk is quite mobile in the ribosome, and is involved in E site tRNA release. Protein L1 is also a translational repressor protein, it controls the translation of the L11 operon by binding to its mRNA. The chain is Large ribosomal subunit protein uL1 from Burkholderia mallei (strain NCTC 10247).